The following is a 402-amino-acid chain: Beta sliding clamp (402 aa).

The protein belongs to the beta sliding clamp family. In terms of assembly, forms a ring-shaped head-to-tail homodimer around DNA which binds and tethers DNA polymerases and other proteins to the DNA. The DNA replisome complex has a single clamp-loading complex (3 tau and 1 each of delta, delta', psi and chi subunits) which binds 3 Pol III cores (1 core on the leading strand and 2 on the lagging strand) each with a beta sliding clamp dimer. Additional proteins in the replisome are other copies of gamma, psi and chi, Ssb, DNA helicase and RNA primase.

It localises to the cytoplasm. Confers DNA tethering and processivity to DNA polymerases and other proteins. Acts as a clamp, forming a ring around DNA (a reaction catalyzed by the clamp-loading complex) which diffuses in an ATP-independent manner freely and bidirectionally along dsDNA. Initially characterized for its ability to contact the catalytic subunit of DNA polymerase III (Pol III), a complex, multichain enzyme responsible for most of the replicative synthesis in bacteria; Pol III exhibits 3'-5' exonuclease proofreading activity. The beta chain is required for initiation of replication as well as for processivity of DNA replication. This is Beta sliding clamp (dnaN) from Mycobacterium bovis (strain ATCC BAA-935 / AF2122/97).